A 150-amino-acid chain; its full sequence is UPF0756 membrane protein Asuc_1151 (150 aa).

4 helical membrane-spanning segments follow: residues 1-21 (MSLHFNSIGFLLVVLALLGVL), 52-72 (YGLNIGVIILTIGVLSPIVAG), 82-102 (LLHWKMFLSLVVGMLVAWLAG), and 123-143 (ILGVGLLGGIPVGPLIAAGIL).

The protein belongs to the UPF0756 family.

It localises to the cell membrane. This Actinobacillus succinogenes (strain ATCC 55618 / DSM 22257 / CCUG 43843 / 130Z) protein is UPF0756 membrane protein Asuc_1151.